The primary structure comprises 131 residues: MSMHDPIADMLTRIRNGQQAKHQQVTLVSSKLKEEIARVLKEEGYIQDFFTETLPNGLKSITLKLKYYHGRPVIEFIKRISRPGLRVYKSYKDLHSIPGFGVAILSTSKGIMTHVSAKVKGVGGEVICEVA.

Belongs to the universal ribosomal protein uS8 family. As to quaternary structure, part of the 30S ribosomal subunit. Contacts proteins S5 and S12.

Its function is as follows. One of the primary rRNA binding proteins, it binds directly to 16S rRNA central domain where it helps coordinate assembly of the platform of the 30S subunit. This is Small ribosomal subunit protein uS8 from Legionella pneumophila (strain Paris).